Consider the following 148-residue polypeptide: Cyanate hydratase (148 aa).

Residues Arg-89, Glu-92, and Ser-115 contribute to the active site.

This sequence belongs to the cyanase family.

It carries out the reaction cyanate + hydrogencarbonate + 3 H(+) = NH4(+) + 2 CO2. Functionally, catalyzes the reaction of cyanate with bicarbonate to produce ammonia and carbon dioxide. The polypeptide is Cyanate hydratase (Sulfurisphaera tokodaii (strain DSM 16993 / JCM 10545 / NBRC 100140 / 7) (Sulfolobus tokodaii)).